The following is a 479-amino-acid chain: Aspartyl/glutamyl-tRNA(Asn/Gln) amidotransferase subunit B (479 aa).

It belongs to the GatB/GatE family. GatB subfamily. As to quaternary structure, heterotrimer of A, B and C subunits.

It catalyses the reaction L-glutamyl-tRNA(Gln) + L-glutamine + ATP + H2O = L-glutaminyl-tRNA(Gln) + L-glutamate + ADP + phosphate + H(+). The enzyme catalyses L-aspartyl-tRNA(Asn) + L-glutamine + ATP + H2O = L-asparaginyl-tRNA(Asn) + L-glutamate + ADP + phosphate + 2 H(+). Functionally, allows the formation of correctly charged Asn-tRNA(Asn) or Gln-tRNA(Gln) through the transamidation of misacylated Asp-tRNA(Asn) or Glu-tRNA(Gln) in organisms which lack either or both of asparaginyl-tRNA or glutaminyl-tRNA synthetases. The reaction takes place in the presence of glutamine and ATP through an activated phospho-Asp-tRNA(Asn) or phospho-Glu-tRNA(Gln). The protein is Aspartyl/glutamyl-tRNA(Asn/Gln) amidotransferase subunit B of Streptococcus pyogenes serotype M3 (strain ATCC BAA-595 / MGAS315).